The sequence spans 121 residues: Histone H2B, sperm (121 aa).

Residues 1–30 (MPPKSGKGQKKAGKAKGAPRSDKKRRRKRK) are disordered. P2 is modified (n,N-dimethylproline). O-linked (GlcNAc) serine glycosylation occurs at S108. K116 participates in a covalent cross-link: Glycyl lysine isopeptide (Lys-Gly) (interchain with G-Cter in ubiquitin).

Belongs to the histone H2B family. The nucleosome is a histone octamer containing two molecules each of H2A, H2B, H3 and H4 assembled in one H3-H4 heterotetramer and two H2A-H2B heterodimers. The octamer wraps approximately 147 bp of DNA. Post-translationally, monoubiquitination of Lys-116 gives a specific tag for epigenetic transcriptional activation and is also prerequisite for histone H3 'Lys-4' and 'Lys-79' methylation. In terms of processing, glcNAcylation at Ser-108 promotes monoubiquitination of Lys-116. It fluctuates in response to extracellular glucose, and associates with transcribed genes.

The protein resides in the nucleus. Its subcellular location is the chromosome. In terms of biological role, core component of nucleosome. Nucleosomes wrap and compact DNA into chromatin, limiting DNA accessibility to the cellular machineries which require DNA as a template. Histones thereby play a central role in transcription regulation, DNA repair, DNA replication and chromosomal stability. DNA accessibility is regulated via a complex set of post-translational modifications of histones, also called histone code, and nucleosome remodeling. In Marthasterias glacialis (Spiny starfish), this protein is Histone H2B, sperm.